A 595-amino-acid chain; its full sequence is Arginine--tRNA ligase (595 aa).

The 'HIGH' region motif lies at 132–142; sequence ANPTGPLHVGH.

The protein belongs to the class-I aminoacyl-tRNA synthetase family. In terms of assembly, monomer.

Its subcellular location is the cytoplasm. The enzyme catalyses tRNA(Arg) + L-arginine + ATP = L-arginyl-tRNA(Arg) + AMP + diphosphate. The sequence is that of Arginine--tRNA ligase from Cupriavidus pinatubonensis (strain JMP 134 / LMG 1197) (Cupriavidus necator (strain JMP 134)).